The chain runs to 310 residues: Acetyl-coenzyme A carboxylase carboxyl transferase subunit alpha (310 aa).

Residues 36 to 286 (NLEKEITKTY…GEYILKQLDE (251 aa)) form the CoA carboxyltransferase C-terminal domain.

It belongs to the AccA family. As to quaternary structure, acetyl-CoA carboxylase is a heterohexamer composed of biotin carboxyl carrier protein (AccB), biotin carboxylase (AccC) and two subunits each of ACCase subunit alpha (AccA) and ACCase subunit beta (AccD).

The protein resides in the cytoplasm. The catalysed reaction is N(6)-carboxybiotinyl-L-lysyl-[protein] + acetyl-CoA = N(6)-biotinyl-L-lysyl-[protein] + malonyl-CoA. Its pathway is lipid metabolism; malonyl-CoA biosynthesis; malonyl-CoA from acetyl-CoA: step 1/1. Component of the acetyl coenzyme A carboxylase (ACC) complex. First, biotin carboxylase catalyzes the carboxylation of biotin on its carrier protein (BCCP) and then the CO(2) group is transferred by the carboxyltransferase to acetyl-CoA to form malonyl-CoA. In Campylobacter fetus subsp. fetus (strain 82-40), this protein is Acetyl-coenzyme A carboxylase carboxyl transferase subunit alpha.